A 219-amino-acid polypeptide reads, in one-letter code: MGDSSSSTSWSSKKDTEDDRMIAFMLSEEYSKLDGAVGRRLSNLAPVPHVPRINCYIPNLNDATLDHQRLLQRLNVYGLCELKVSGDGNCQFRALSDQLYRSPEYHKQVRREVVKQLKECRSMYESYVPMKYKRYYKKMGKFGEWGDHITLQAAADRFAAKICLLTSFRDTCFIEIIPQYQAPKGVLWLSFWSEVHYNSLYDIQAAPVQHKPKRKHWLF.

The 125-residue stretch at 79-203 (LCELKVSGDG…EVHYNSLYDI (125 aa)) folds into the OTU domain. Asp87 is an active-site residue. Cys90 serves as the catalytic Nucleophile. His196 is an active-site residue.

The protein belongs to the peptidase C85 family.

The catalysed reaction is Thiol-dependent hydrolysis of ester, thioester, amide, peptide and isopeptide bonds formed by the C-terminal Gly of ubiquitin (a 76-residue protein attached to proteins as an intracellular targeting signal).. Its function is as follows. Hydrolase that can remove conjugated ubiquitin from proteins in vitro and may therefore play an important regulatory role at the level of protein turnover by preventing degradation. Inactive cysteine protease. The protein is OVARIAN TUMOR DOMAIN-containing deubiquitinating enzyme 12 of Arabidopsis thaliana (Mouse-ear cress).